Consider the following 337-residue polypeptide: Ketol-acid reductoisomerase (NADP(+)) (337 aa).

One can recognise a KARI N-terminal Rossmann domain in the interval 3 to 183; that stretch reads IELFYDADAD…GGGRAGIIPT (181 aa). NADP(+) is bound by residues 26-29, Arg49, Ser52, Ser54, and 84-87; these read YGSQ and DTSQ. His109 is a catalytic residue. Residue Gly135 participates in NADP(+) binding. Residues 184–329 form the KARI C-terminal knotted domain; that stretch reads TFEAETVTDL…AKLRDLMSWV (146 aa). 4 residues coordinate Mg(2+): Asp192, Glu196, Glu228, and Glu232. Ser253 provides a ligand contact to substrate.

It belongs to the ketol-acid reductoisomerase family. The cofactor is Mg(2+).

It carries out the reaction (2R)-2,3-dihydroxy-3-methylbutanoate + NADP(+) = (2S)-2-acetolactate + NADPH + H(+). The enzyme catalyses (2R,3R)-2,3-dihydroxy-3-methylpentanoate + NADP(+) = (S)-2-ethyl-2-hydroxy-3-oxobutanoate + NADPH + H(+). The protein operates within amino-acid biosynthesis; L-isoleucine biosynthesis; L-isoleucine from 2-oxobutanoate: step 2/4. It functions in the pathway amino-acid biosynthesis; L-valine biosynthesis; L-valine from pyruvate: step 2/4. Functionally, involved in the biosynthesis of branched-chain amino acids (BCAA). Catalyzes an alkyl-migration followed by a ketol-acid reduction of (S)-2-acetolactate (S2AL) to yield (R)-2,3-dihydroxy-isovalerate. In the isomerase reaction, S2AL is rearranged via a Mg-dependent methyl migration to produce 3-hydroxy-3-methyl-2-ketobutyrate (HMKB). In the reductase reaction, this 2-ketoacid undergoes a metal-dependent reduction by NADPH to yield (R)-2,3-dihydroxy-isovalerate. This Corynebacterium efficiens (strain DSM 44549 / YS-314 / AJ 12310 / JCM 11189 / NBRC 100395) protein is Ketol-acid reductoisomerase (NADP(+)).